We begin with the raw amino-acid sequence, 247 residues long: Acidic 27 kDa endochitinase (247 aa).

The N-terminal stretch at 1 to 16 (MVLCCVFLLFLTGSFA) is a signal peptide. Glu-84 (proton donor) is an active-site residue. Cys-206 and Cys-238 are oxidised to a cystine.

Belongs to the glycosyl hydrolase 19 family. Chitinase class II subfamily.

The protein resides in the secreted. The protein localises to the extracellular space. It catalyses the reaction Random endo-hydrolysis of N-acetyl-beta-D-glucosaminide (1-&gt;4)-beta-linkages in chitin and chitodextrins.. Defense against chitin-containing fungal pathogens. The polypeptide is Acidic 27 kDa endochitinase (CHI17) (Solanum lycopersicum (Tomato)).